A 273-amino-acid chain; its full sequence is Pyridoxal phosphate homeostasis protein (273 aa).

Position 6 is a phosphoserine (Ser6). Lys47 carries the N6-(pyridoxal phosphate)lysine modification. Position 69 is a phosphotyrosine (Tyr69). At Lys125 the chain carries N6-succinyllysine. 2 positions are modified to phosphoserine: Ser226 and Ser244. Basic and acidic residues predominate over residues 251–260; the sequence is DYSKKTDKPA. The tract at residues 251-273 is disordered; that stretch reads DYSKKTDKPAAELQAPEEVAQAH.

The protein belongs to the pyridoxal phosphate-binding protein YggS/PROSC family.

Its function is as follows. Pyridoxal 5'-phosphate (PLP)-binding protein, which may be involved in intracellular homeostatic regulation of pyridoxal 5'-phosphate (PLP), the active form of vitamin B6. In Bos taurus (Bovine), this protein is Pyridoxal phosphate homeostasis protein.